Consider the following 407-residue polypeptide: MAFFGLSRVSRRLLKSSVSVTPSSSSALLQSQHKSLSNPVTTHYTNPFTKCYPSWNDNYQVWSKGRELHQEKFFGVGWNYRLICGMSSSSSVLEGKPKKDDKEKSDGVVVKEASWIDLYLPEEVRGYAKLARLDKPIGTWLLAWPCMWSIALAADPGSLPSFKYMALFGCGALLLRGAGCTINDLLDQDIDTKVDRTKLRPIASGLLTPFQGIGFLGLQLLLGLGILLQLNNYSRVLGASSLLLVFSYPLMKRFTFWPQAFLGLTINWGALLGWTAVKGSIAPSIVLPLYLSGVCWTLVYDTIYAHQDKEDDVKVGVKSTALRFGDNTKLWLTGFGTASIGFLALSGFSADLGWQYYASLAAASGQLGWQIGTADLSSGADCSRKFVSNKWFGAIIFSGVVLGRSFQ.

Residues 1–20 (MAFFGLSRVSRRLLKSSVSV) constitute a mitochondrion transit peptide. 6 helical membrane passes run 137-157 (IGTW…ADPG), 162-182 (FKYM…GCTI), 210-230 (FQGI…LLQL), 254-274 (FTFW…LLGW), 279-299 (GSIA…WTLV), and 330-350 (LWLT…GFSA).

Belongs to the UbiA prenyltransferase family. Mg(2+) serves as cofactor. As to expression, expressed in flowers.

Its subcellular location is the mitochondrion inner membrane. It carries out the reaction an all-trans-polyprenyl diphosphate + 4-hydroxybenzoate = a 4-hydroxy-3-(all-trans-polyprenyl)benzoate + diphosphate. Its pathway is cofactor biosynthesis; ubiquinone biosynthesis. In terms of biological role, catalyzes the prenylation of para-hydroxybenzoate (PHB) with an all-trans polyprenyl group. Mediates the second step in the final reaction sequence of coenzyme Q (CoQ) biosynthesis, which is the condensation of the polyisoprenoid side chain with PHB, generating the first membrane-bound Q intermediate. Required for embryo development. In Arabidopsis thaliana (Mouse-ear cress), this protein is 4-hydroxybenzoate polyprenyltransferase, mitochondrial.